Here is a 228-residue protein sequence, read N- to C-terminus: Large ribosomal subunit protein uL4 (228 aa).

2 disordered regions span residues 45–102 (GRQG…SQRT) and 208–228 (PAKG…EANQ). Residues 208–221 (PAKGKTAKAAATSG) are compositionally biased toward low complexity.

This sequence belongs to the universal ribosomal protein uL4 family. In terms of assembly, part of the 50S ribosomal subunit.

Functionally, one of the primary rRNA binding proteins, this protein initially binds near the 5'-end of the 23S rRNA. It is important during the early stages of 50S assembly. It makes multiple contacts with different domains of the 23S rRNA in the assembled 50S subunit and ribosome. In terms of biological role, forms part of the polypeptide exit tunnel. This is Large ribosomal subunit protein uL4 from Saccharopolyspora erythraea (strain ATCC 11635 / DSM 40517 / JCM 4748 / NBRC 13426 / NCIMB 8594 / NRRL 2338).